The following is a 309-amino-acid chain: Porphobilinogen deaminase (309 aa).

Residue C241 is modified to S-(dipyrrolylmethanemethyl)cysteine.

It belongs to the HMBS family. As to quaternary structure, monomer. Dipyrromethane is required as a cofactor.

The enzyme catalyses 4 porphobilinogen + H2O = hydroxymethylbilane + 4 NH4(+). Its pathway is porphyrin-containing compound metabolism; protoporphyrin-IX biosynthesis; coproporphyrinogen-III from 5-aminolevulinate: step 2/4. Tetrapolymerization of the monopyrrole PBG into the hydroxymethylbilane pre-uroporphyrinogen in several discrete steps. The protein is Porphobilinogen deaminase of Bacillus anthracis (strain A0248).